Reading from the N-terminus, the 490-residue chain is Keratin, type II cytoskeletal 8 (490 aa).

Residues 1 to 27 (MSIRVTQKSYKMSTSGPRAFSSRSFTS) show a composition bias toward polar residues. A disordered region spans residues 1-48 (MSIRVTQKSYKMSTSGPRAFSSRSFTSGPGARISSSSFSRVGSSSSSF). Positions 1-96 (MSIRVTQKSY…DPNIQAVRTQ (96 aa)) are head. At Ser9 the chain carries Phosphoserine; by PKC/PRKCE. Residue Lys11 forms a Glycyl lysine isopeptide (Lys-Gly) (interchain with G-Cter in SUMO2) linkage. Residues Ser13, Ser15, Ser21, and Ser22 each carry the phosphoserine modification. Position 23 is an omega-N-methylarginine (Arg23). Ser24 carries the post-translational modification Phosphoserine; by PKC/PRKCE. Thr26 is modified (phosphothreonine). The residue at position 27 (Ser27) is a Phosphoserine. Arg32 bears the Omega-N-methylarginine mark. Phosphoserine is present on residues Ser34, Ser37, and Ser39. Positions 34–48 (SSSSFSRVGSSSSSF) are enriched in low complexity. Omega-N-methylarginine is present on Arg40. A phosphoserine mark is found at Ser43, Ser44, and Ser47. Position 49 is an asymmetric dimethylarginine; alternate (Arg49). Residue Arg49 is modified to Omega-N-methylarginine; alternate. Residue Ser51 is modified to Phosphoserine. The residue at position 80 (Ser80) is a Phosphoserine; by MAPK. Residues 97-132 (EKEQIKSLNNKFASFIDKVRFLEQQNKMLETKWSLL) form a coil 1A region. The region spanning 97–408 (EKEQIKSLNN…KLLEGEESRL (312 aa)) is the IF rod domain. Lys107 carries the N6-malonyllysine modification. Glycyl lysine isopeptide (Lys-Gly) (interchain with G-Cter in SUMO2) cross-links involve residues Lys128 and Lys136. The interval 133–149 (QQQKTSRSNMDNMFESY) is linker 1. A coil 1B region spans residues 150–241 (INNLRRQLEA…QIHEEEIREL (92 aa)). Residue Lys203 forms a Glycyl lysine isopeptide (Lys-Gly) (interchain with G-Cter in SUMO1); alternate linkage. Lys203 participates in a covalent cross-link: Glycyl lysine isopeptide (Lys-Gly) (interchain with G-Cter in SUMO2); alternate. Lys213 is subject to N6-acetyllysine. The interval 242–265 (QSQISDTSVVLSMDNSRSLDMDGI) is linker 12. Residues Ser259 and Ser280 each carry the phosphoserine modification. Positions 266 to 403 (IAEVRAQYED…ITTYRKLLEG (138 aa)) are coil 2. The tract at residues 267-387 (AEVRAQYEDI…REYQELMNVK (121 aa)) is necessary for interaction with PNN. Residue Lys291 forms a Glycyl lysine isopeptide (Lys-Gly) (interchain with G-Cter in SUMO2) linkage. Residue Lys301 forms a Glycyl lysine isopeptide (Lys-Gly) (interchain with G-Cter in SUMO2); alternate linkage. Lys301 carries the post-translational modification N6-acetyllysine; alternate. Lys310 participates in a covalent cross-link: Glycyl lysine isopeptide (Lys-Gly) (interchain with G-Cter in SUMO2). Lys331 is covalently cross-linked (Glycyl lysine isopeptide (Lys-Gly) (interchain with G-Cter in SUMO2); alternate). The residue at position 331 (Lys331) is an N6-acetyllysine; alternate. Ser336 is subject to Phosphoserine. A Glycyl lysine isopeptide (Lys-Gly) (interchain with G-Cter in SUMO2) cross-link involves residue Lys399. Residues 404 to 490 (EESRLESGMQ…VSESSDVVSK (87 aa)) form a tail region. A phosphoserine mark is found at Ser406, Ser410, Ser416, Ser423, Ser430, Ser432, and Ser438. Lys479 is covalently cross-linked (Glycyl lysine isopeptide (Lys-Gly) (interchain with G-Cter in SUMO1); alternate). Lys479 participates in a covalent cross-link: Glycyl lysine isopeptide (Lys-Gly) (interchain with G-Cter in SUMO2); alternate. 4 positions are modified to phosphoserine: Ser482, Ser484, Ser485, and Ser489.

It belongs to the intermediate filament family. Heterotetramer of two type I and two type II keratins. Forms a heterodimer with KRT18. Associates with KRT20. Interacts with PLEC isoform 1C, when in a heterodimer with KRT18. Interacts with PNN. When associated with KRT19, interacts with DMD. Interacts with TCHP. Interacts with APEX1. Interacts with GPER1. Interacts with EPPK1. Interacts with PKP1 and PKP2. Post-translationally, phosphorylation on serine residues is enhanced during EGF stimulation and mitosis. Ser-80 phosphorylation plays an important role in keratin filament reorganization. O-glycosylated. O-GlcNAcylation at multiple sites increases solubility, and decreases stability by inducing proteasomal degradation. In terms of processing, O-glycosylated (O-GlcNAcylated), in a cell cycle-dependent manner. In terms of tissue distribution, expressed in abundance in the epithelia of colon, bladder, ileum, and stomach, with lower expression observed in earskin (at protein level). Also expressed in pancreas, liver, dudenum and jejunum.

Its subcellular location is the cytoplasm. The protein resides in the nucleus. It localises to the nucleoplasm. It is found in the nucleus matrix. Its function is as follows. Together with KRT19, helps to link the contractile apparatus to dystrophin at the costameres of striated muscle. The polypeptide is Keratin, type II cytoskeletal 8 (Krt8) (Mus musculus (Mouse)).